The chain runs to 506 residues: Vinckepain-1 (506 aa).

Topologically, residues 1 to 32 (MSDNIGQINFTIPGIQSLDENDTYLKINHKKT) are cytoplasmic. Positions 1–262 (MSDNIGQINF…LISVDNKSKD (262 aa)) are cleaved as a propeptide — activation peptide. Residues 33–53 (IKICAYAITAIALFFIGGVFF) traverse the membrane as a helical; Signal-anchor for type II membrane protein segment. The Lumenal portion of the chain corresponds to 54-506 (KNQAKINALD…VGSDVFFPIY (453 aa)). Residues Asn133 and Asn258 are each glycosylated (N-linked (GlcNAc...) asparagine). 4 disulfides stabilise this stretch: Cys284–Cys326, Cys319–Cys359, Cys344–Cys364, and Cys413–Cys495. Residue Cys287 is part of the active site. An N-linked (GlcNAc...) asparagine glycan is attached at Asn418. Residues His419 and Asn470 contribute to the active site.

This sequence belongs to the peptidase C1 family.

It localises to the membrane. Functionally, cysteine protease. The chain is Vinckepain-1 from Plasmodium vinckei.